Here is a 112-residue protein sequence, read N- to C-terminus: Small ribosomal subunit protein bS6 (112 aa).

This sequence belongs to the bacterial ribosomal protein bS6 family.

Binds together with bS18 to 16S ribosomal RNA. This is Small ribosomal subunit protein bS6 from Chlamydia abortus (strain DSM 27085 / S26/3) (Chlamydophila abortus).